The chain runs to 196 residues: UPF0319 protein VV0948 (196 aa).

A signal peptide spans 1 to 19; the sequence is MKKMMILSALALFSSSLFA.

This sequence belongs to the UPF0319 family.

This chain is UPF0319 protein VV0948, found in Vibrio vulnificus (strain YJ016).